The sequence spans 70 residues: Putative membrane protein insertion efficiency factor (70 aa).

The protein belongs to the UPF0161 family.

It localises to the cell inner membrane. Functionally, could be involved in insertion of integral membrane proteins into the membrane. This Geobacter sp. (strain M21) protein is Putative membrane protein insertion efficiency factor.